A 1024-amino-acid chain; its full sequence is Multidrug resistance protein MdtC (1024 aa).

11 consecutive transmembrane segments (helical) span residues 15–35 (WLLT…LPVA), 333–353 (EVEQ…FAFL), 360–380 (LIPA…MYLC), 387–407 (LSLM…IVVL), 431–451 (VGFT…PLLL), 463–483 (FAIT…TLTP), 528–548 (WGLL…ISIP), 853–873 (LWLI…LYES), 897–917 (LFNA…IGIV), 953–973 (PIIM…LGSG), and 984–1004 (ITIV…TPVV).

It belongs to the resistance-nodulation-cell division (RND) (TC 2.A.6) family. MdtC subfamily. Part of a tripartite efflux system composed of MdtA, MdtB and MdtC. MdtC forms a heteromultimer with MdtB.

It is found in the cell inner membrane. The chain is Multidrug resistance protein MdtC from Erwinia tasmaniensis (strain DSM 17950 / CFBP 7177 / CIP 109463 / NCPPB 4357 / Et1/99).